We begin with the raw amino-acid sequence, 66 residues long: Conotoxin Ca5.2 (66 aa).

An N-terminal signal peptide occupies residues 1–22; the sequence is MRCVPVFLILLGLIASAPSVDA. Residues 23-48 constitute a propeptide that is removed on maturation; the sequence is RPQTKDDALASFHDSAKRHLQRLVNA. Phenylalanine 62 carries the phenylalanine amide modification.

This sequence belongs to the conotoxin T superfamily. In terms of processing, contains 2 disulfide bonds that can be either 'C1-C3, C2-C4' or 'C1-C4, C2-C3', since these disulfide connectivities have been observed for conotoxins with cysteine framework V (for examples, see AC P0DQQ7 and AC P81755). As to expression, expressed by the venom duct.

It is found in the secreted. In Conus caracteristicus (Characteristic cone), this protein is Conotoxin Ca5.2.